We begin with the raw amino-acid sequence, 309 residues long: Probable L,D-transpeptidase ErfK/SrfK (309 aa).

An N-terminal signal peptide occupies residues 1-21 (MRRITPFFPFFVLLVSHFSLA). The L,D-TPase catalytic domain occupies 96–231 (EGIVVNVAEM…VPVGTRVQII (136 aa)). Histidine 191 (proton donor/acceptor) is an active-site residue. Cysteine 207 (nucleophile) is an active-site residue.

Belongs to the YkuD family.

It localises to the periplasm. The protein operates within cell wall biogenesis; peptidoglycan biosynthesis. The protein is Probable L,D-transpeptidase ErfK/SrfK (erfK) of Salmonella typhimurium (strain LT2 / SGSC1412 / ATCC 700720).